A 452-amino-acid chain; its full sequence is MSTPVNYLIPRQKDELHKAILAYFSASGLSNTGAALREELGVGDEFLDQNTMKKYEGVLEKKWTGVLRLQKKIMELESRLSSLQSELDSATPTSLTRRNVDPSSWLPRAPAKHVLTSHRNSINSVAFHPIFSVLASGSDDTTIKIWDWELGELERTVKGHTKAVLDLDFGGPKAGVLLVSCSSDLTIKLWDPNNEYKNIRTLTGHDHSVSAVRFIPSAAGEYLVSASRDKTLRVWEVATGYCVKTISGHSDWIRDVEPSHDGRWLLSAGGDQTTRLWDASTAEHKATFLGHEHVVNCCVFAPPSSYPHLATIAGLKKPPPATSSSEFIATGSRDKTIKLWDARGTLLKTLVGHDNWIRALAFHPAGKYLLSVSDDKTIRCWDLTQDGRCVKTVDEAHSHFATCLRWAPAPAKEQTNGEAKTNGIPKAGEKVINVRCVIATGSADMNVRVFAS.

In terms of domain architecture, LisH spans 12–44 (QKDELHKAILAYFSASGLSNTGAALREELGVGD). Positions 64–91 (TGVLRLQKKIMELESRLSSLQSELDSAT) form a coiled coil. WD repeat units lie at residues 117 to 158 (SHRN…RTVK), 160 to 200 (HTKA…KNIR), 204 to 245 (GHDH…CVKT), 248 to 287 (GHSD…HKAT), 290 to 350 (GHEH…LKTL), 352 to 391 (GHDN…RCVK), 396 to 435 (AHSH…INVR), and 437 to 452 (VIAT…VFAS).

It belongs to the WD repeat LIS1/nudF family. Self-associates. Interacts with NDL1 and dynein.

The protein resides in the cytoplasm. The protein localises to the cytoskeleton. Its subcellular location is the spindle pole. Functionally, positively regulates the activity of the minus-end directed microtubule motor protein dynein. May enhance dynein-mediated microtubule sliding by targeting dynein to the microtubule plus end. Required for nuclear migration during vegetative growth as well as development. Required for retrograde early endosome (EE) transport from the hyphal tip. Required for localization of dynein to the mitotic spindle poles. Recruits additional proteins to the dynein complex at SPBs. This Tuber melanosporum (strain Mel28) (Perigord black truffle) protein is Nuclear distribution protein PAC1.